A 645-amino-acid chain; its full sequence is Sodium-dependent nutrient amino acid transporter 1 (645 aa).

The segment at 1–48 (MELKTMPHNGANGSPQHNNNNNSNNNNNVSSDTKTDNNEKEAQKKDEG) is disordered. Residues 1–51 (MELKTMPHNGANGSPQHNNNNNSNNNNNVSSDTKTDNNEKEAQKKDEGRTN) are Cytoplasmic-facing. The span at 18 to 32 (NNNNNSNNNNNVSSD) shows a compositional bias: low complexity. Over residues 33–48 (TKTDNNEKEAQKKDEG) the composition is skewed to basic and acidic residues. 3 helical membrane passes run 52 to 72 (WSNG…LGNV), 85 to 105 (GAFL…MYYL), and 138 to 158 (TICI…YLFV). Residues Asn-191 and Asn-205 are each glycosylated (N-linked (GlcNAc...) asparagine). The next 7 helical transmembrane spans lie at 234–254 (IPDW…FLVI), 264–284 (AAYF…GRAV), 313–333 (AVVQ…MFAS), 347–367 (IVTT…FAIL), 407–427 (LFSV…IVAL), 454–474 (CGFL…LTLV), and 480–500 (TYVV…IYGL). Residue Asn-514 is glycosylated (N-linked (GlcNAc...) asparagine). 2 helical membrane-spanning segments follow: residues 522 to 542 (CWSF…MATI) and 559 to 579 (AGWL…WWYI).

Belongs to the sodium:neurotransmitter symporter (SNF) (TC 2.A.22) family.

The protein localises to the membrane. In terms of biological role, unusual broad substrate spectrum amino acid:sodium cotransporter that promotes absorption of the D isomers of essential amino acids. Neutral amino acids are the preferred substrates, especially methionine and phenylalanine. This Drosophila mojavensis (Fruit fly) protein is Sodium-dependent nutrient amino acid transporter 1.